A 45-amino-acid chain; its full sequence is Rubredoxin-1 (45 aa).

M1 is modified (N-formylmethionine). The Rubredoxin-like domain maps to 1–45 (MQKYVCNVCGYEYDPAEHDNVPFDQLPDDWCCPVCGVSKDQFSPA). 4 residues coordinate Fe cation: C6, C9, C32, and C35.

The protein belongs to the rubredoxin family. It depends on Fe(3+) as a cofactor.

The protein localises to the cytoplasm. In terms of biological role, rubredoxin is a small nonheme, iron protein lacking acid-labile sulfide. Its single Fe, chelated to 4 Cys, functions as an electron acceptor and may also stabilize the conformation of the molecule. Electron acceptor for cytoplasmic lactate dehydrogenase. This Desulfovibrio desulfuricans (strain ATCC 27774 / DSM 6949 / MB) protein is Rubredoxin-1 (rd1).